The chain runs to 180 residues: Large ribosomal subunit protein uL6 (180 aa).

The protein belongs to the universal ribosomal protein uL6 family. As to quaternary structure, part of the 50S ribosomal subunit.

This protein binds to the 23S rRNA, and is important in its secondary structure. It is located near the subunit interface in the base of the L7/L12 stalk, and near the tRNA binding site of the peptidyltransferase center. The sequence is that of Large ribosomal subunit protein uL6 from Clostridium botulinum (strain ATCC 19397 / Type A).